Consider the following 921-residue polypeptide: Protein translocase subunit SecA (921 aa).

ATP-binding positions include Q87, 105-109 (GEGKT), and D515. The segment at 872-901 (DMEVAGSTGDRGAALDIQPAPVRSGPKIGR) is disordered. Zn(2+) contacts are provided by C905, C907, C916, and C917.

It belongs to the SecA family. Monomer and homodimer. Part of the essential Sec protein translocation apparatus which comprises SecA, SecYEG and auxiliary proteins SecDF-YajC and YidC. It depends on Zn(2+) as a cofactor.

The protein localises to the cell inner membrane. Its subcellular location is the cytoplasm. The catalysed reaction is ATP + H2O + cellular proteinSide 1 = ADP + phosphate + cellular proteinSide 2.. Its function is as follows. Part of the Sec protein translocase complex. Interacts with the SecYEG preprotein conducting channel. Has a central role in coupling the hydrolysis of ATP to the transfer of proteins into and across the cell membrane, serving both as a receptor for the preprotein-SecB complex and as an ATP-driven molecular motor driving the stepwise translocation of polypeptide chains across the membrane. The chain is Protein translocase subunit SecA from Polynucleobacter asymbioticus (strain DSM 18221 / CIP 109841 / QLW-P1DMWA-1) (Polynucleobacter necessarius subsp. asymbioticus).